Consider the following 466-residue polypeptide: Coagulation factor VII (466 aa).

The signal sequence occupies residues 1-20 (MVSQALRLLCLLLGLQGCLA). A propeptide spanning residues 21-60 (AGGVAKASGGETRDMPWKPGPHRVFVTQEEAHGVLHRRRR) is cleaved from the precursor. A Gla domain is found at 61–105 (ANAFLEELRPGSLERECKEEQCSFEEAREIFKDAERTKLFWISYS). A 4-carboxyglutamate mark is found at glutamate 66, glutamate 67, glutamate 74, glutamate 76, glutamate 79, glutamate 80, glutamate 85, glutamate 86, glutamate 89, and glutamate 95. A disulfide bridge links cysteine 77 with cysteine 82. Residues 106–142 (DGDQCASSPCQNGGSCKDQLQSYICFCLPAFEGRNCE) enclose the EGF-like 1; calcium-binding domain. Intrachain disulfides connect cysteine 110–cysteine 121, cysteine 115–cysteine 130, cysteine 132–cysteine 141, cysteine 151–cysteine 162, cysteine 158–cysteine 172, cysteine 174–cysteine 187, cysteine 195–cysteine 322, cysteine 219–cysteine 224, cysteine 238–cysteine 254, and cysteine 370–cysteine 389. The O-linked (Glc...) serine; alternate glycan is linked to serine 112. An O-linked (Xyl...) serine; alternate glycan is attached at serine 112. Residue serine 120 is glycosylated (O-linked (Fuc) serine). At aspartate 123 the chain carries (3R)-3-hydroxyaspartate. The EGF-like 2 domain occupies 147 to 188 (DQLICVNENGGCEQYCSDHTGTKRSCRCHEGYSLLADGVSCT). N-linked (GlcNAc...) asparagine glycosylation occurs at asparagine 205. Residues 213 to 452 (IVGGKVCPKG…YIEWLQKLMR (240 aa)) form the Peptidase S1 domain. Catalysis depends on charge relay system residues histidine 253 and aspartate 302. A glycan (N-linked (GlcNAc...) asparagine) is linked at asparagine 382. Residue aspartate 398 coordinates substrate. Cysteine 400 and cysteine 428 are joined by a disulfide. Serine 404 acts as the Charge relay system in catalysis.

The protein belongs to the peptidase S1 family. Heterodimer of a light chain and a heavy chain linked by a disulfide bond. Interacts (activated) with iripin-8, a serine protease inhibitor from Ixodes ricinus saliva. The vitamin K-dependent, enzymatic carboxylation of some glutamate residues allows the modified protein to bind calcium. In terms of processing, the iron and 2-oxoglutarate dependent 3-hydroxylation of aspartate and asparagine is (R) stereospecific within EGF domains. Post-translationally, O- and N-glycosylated. N-glycosylation at Asn-205 occurs cotranslationally and is mediated by STT3A-containing complexes, while glycosylation at Asn-382 is post-translational and is mediated STT3B-containing complexes before folding. O-fucosylated by POFUT1 on a conserved serine or threonine residue found in the consensus sequence C2-X(4,5)-[S/T]-C3 of EGF domains, where C2 and C3 are the second and third conserved cysteines. Can be either O-glucosylated or O-xylosylated at Ser-112 by POGLUT1 in vitro. In terms of tissue distribution, plasma.

The protein localises to the secreted. The enzyme catalyses Selective cleavage of Arg-|-Ile bond in factor X to form factor Xa.. Functionally, initiates the extrinsic pathway of blood coagulation. Serine protease that circulates in the blood in a zymogen form. Factor VII is converted to factor VIIa by factor Xa, factor XIIa, factor IXa, or thrombin by minor proteolysis. In the presence of tissue factor and calcium ions, factor VIIa then converts factor X to factor Xa by limited proteolysis. Factor VIIa also converts factor IX to factor IXa in the presence of tissue factor and calcium. The protein is Coagulation factor VII (F7) of Homo sapiens (Human).